A 185-amino-acid polypeptide reads, in one-letter code: Large ribosomal subunit protein uL5 (185 aa).

Belongs to the universal ribosomal protein uL5 family. Part of the 50S ribosomal subunit; part of the 5S rRNA/L5/L18/L25 subcomplex. Contacts the 5S rRNA and the P site tRNA. Forms a bridge to the 30S subunit in the 70S ribosome.

This is one of the proteins that bind and probably mediate the attachment of the 5S RNA into the large ribosomal subunit, where it forms part of the central protuberance. In the 70S ribosome it contacts protein S13 of the 30S subunit (bridge B1b), connecting the 2 subunits; this bridge is implicated in subunit movement. Contacts the P site tRNA; the 5S rRNA and some of its associated proteins might help stabilize positioning of ribosome-bound tRNAs. In Rhizobium leguminosarum bv. trifolii (strain WSM2304), this protein is Large ribosomal subunit protein uL5.